A 144-amino-acid polypeptide reads, in one-letter code: Grifin (144 aa).

The 129-residue stretch at Ser-5–Ala-133 folds into the Galectin domain. Ser-138 carries the post-translational modification Phosphoserine.

As to quaternary structure, homodimer. As to expression, not detected in lens.

In Homo sapiens (Human), this protein is Grifin (GRIFIN).